Here is a 524-residue protein sequence, read N- to C-terminus: Putative ribose/galactose/methyl galactoside import ATP-binding protein 1 (524 aa).

ABC transporter domains are found at residues 29-270 (LEMR…VGRT) and 280-524 (VPIG…TGGH). Residue 61 to 68 (GENGAGKS) coordinates ATP.

It belongs to the ABC transporter superfamily. Carbohydrate importer 2 (CUT2) (TC 3.A.1.2) family.

It localises to the cell inner membrane. It catalyses the reaction D-ribose(out) + ATP + H2O = D-ribose(in) + ADP + phosphate + H(+). It carries out the reaction D-galactose(out) + ATP + H2O = D-galactose(in) + ADP + phosphate + H(+). In terms of biological role, part of an ABC transporter complex involved in carbohydrate import. Could be involved in ribose, galactose and/or methyl galactoside import. Responsible for energy coupling to the transport system. In Rhizobium etli (strain ATCC 51251 / DSM 11541 / JCM 21823 / NBRC 15573 / CFN 42), this protein is Putative ribose/galactose/methyl galactoside import ATP-binding protein 1.